The primary structure comprises 834 residues: Periplasmic nitrate reductase (834 aa).

Residues 1-29 (MSLTRRQFAKANAAAIAATVAGMPIASTA) constitute a signal peptide (tat-type signal). The 4Fe-4S Mo/W bis-MGD-type domain occupies 41–97 (LKWDKAPCRFCGTGCGVMVATRENRVVATHGDVKADVNRGINCVKGYFLSKIMYGTD). [4Fe-4S] cluster contacts are provided by cysteine 48, cysteine 51, cysteine 55, and cysteine 83. Residues lysine 85, glutamine 152, asparagine 177, cysteine 181, 214–221 (WGSNMAEM), 245–249 (STFEH), 264–266 (QTD), methionine 375, glutamine 379, asparagine 485, 511–512 (SD), lysine 534, aspartate 561, and 721–730 (TGRVLEHWHT) contribute to the Mo-bis(molybdopterin guanine dinucleotide) site. Substrate is bound at residue phenylalanine 797. Residues asparagine 805 and lysine 822 each contribute to the Mo-bis(molybdopterin guanine dinucleotide) site.

This sequence belongs to the prokaryotic molybdopterin-containing oxidoreductase family. NasA/NapA/NarB subfamily. Component of the periplasmic nitrate reductase NapAB complex composed of NapA and NapB. The cofactor is [4Fe-4S] cluster. Mo-bis(molybdopterin guanine dinucleotide) is required as a cofactor. Post-translationally, predicted to be exported by the Tat system. The position of the signal peptide cleavage has not been experimentally proven.

The protein resides in the periplasm. The catalysed reaction is 2 Fe(II)-[cytochrome] + nitrate + 2 H(+) = 2 Fe(III)-[cytochrome] + nitrite + H2O. Catalytic subunit of the periplasmic nitrate reductase complex NapAB. Receives electrons from NapB and catalyzes the reduction of nitrate to nitrite. The sequence is that of Periplasmic nitrate reductase from Stutzerimonas stutzeri (Pseudomonas stutzeri).